We begin with the raw amino-acid sequence, 810 residues long: Phenylalanine--tRNA ligase beta subunit (810 aa).

The tRNA-binding domain occupies 39-151 (RTWAAGVVVG…AGLQAGQPVG (113 aa)). Residues 408-494 (EPEHSITLRL…RLYGYDNFGE (87 aa)) form the B5 domain. Mg(2+)-binding residues include D472, D478, E481, and E482. The FDX-ACB domain maps to 716–809 (SSFPASDRDL…LVERFRVTLR (94 aa)).

Belongs to the phenylalanyl-tRNA synthetase beta subunit family. Type 1 subfamily. As to quaternary structure, tetramer of two alpha and two beta subunits. Mg(2+) serves as cofactor.

The protein localises to the cytoplasm. The enzyme catalyses tRNA(Phe) + L-phenylalanine + ATP = L-phenylalanyl-tRNA(Phe) + AMP + diphosphate + H(+). This chain is Phenylalanine--tRNA ligase beta subunit (pheT), found in Synechococcus elongatus (strain ATCC 33912 / PCC 7942 / FACHB-805) (Anacystis nidulans R2).